A 227-amino-acid polypeptide reads, in one-letter code: Cytochrome c oxidase subunit 2 (227 aa).

Topologically, residues 1-14 are mitochondrial intermembrane; that stretch reads MAYPMQLGLQDATS. Residues 15–45 form a helical membrane-spanning segment; that stretch reads PIMEELMNFHDHTLMIVFLISSLVLYLISLM. Over 46–59 the chain is Mitochondrial matrix; that stretch reads LTTKLIHTNTMDAQ. A helical transmembrane segment spans residues 60–87; that stretch reads EVETIWTILPAIILVLIALPSLRILYMM. Residues 88 to 227 lie on the Mitochondrial intermembrane side of the membrane; sequence DEINNPVLTV…FFENWSSSMT (140 aa). Histidine 161, cysteine 196, glutamate 198, cysteine 200, histidine 204, and methionine 207 together coordinate Cu cation. Glutamate 198 provides a ligand contact to Mg(2+).

The protein belongs to the cytochrome c oxidase subunit 2 family. Component of the cytochrome c oxidase (complex IV, CIV), a multisubunit enzyme composed of 14 subunits. The complex is composed of a catalytic core of 3 subunits MT-CO1, MT-CO2 and MT-CO3, encoded in the mitochondrial DNA, and 11 supernumerary subunits COX4I, COX5A, COX5B, COX6A, COX6B, COX6C, COX7A, COX7B, COX7C, COX8 and NDUFA4, which are encoded in the nuclear genome. The complex exists as a monomer or a dimer and forms supercomplexes (SCs) in the inner mitochondrial membrane with NADH-ubiquinone oxidoreductase (complex I, CI) and ubiquinol-cytochrome c oxidoreductase (cytochrome b-c1 complex, complex III, CIII), resulting in different assemblies (supercomplex SCI(1)III(2)IV(1) and megacomplex MCI(2)III(2)IV(2)). Found in a complex with TMEM177, COA6, COX18, COX20, SCO1 and SCO2. Interacts with TMEM177 in a COX20-dependent manner. Interacts with COX20. Interacts with COX16. The cofactor is Cu cation.

It localises to the mitochondrion inner membrane. It carries out the reaction 4 Fe(II)-[cytochrome c] + O2 + 8 H(+)(in) = 4 Fe(III)-[cytochrome c] + 2 H2O + 4 H(+)(out). Functionally, component of the cytochrome c oxidase, the last enzyme in the mitochondrial electron transport chain which drives oxidative phosphorylation. The respiratory chain contains 3 multisubunit complexes succinate dehydrogenase (complex II, CII), ubiquinol-cytochrome c oxidoreductase (cytochrome b-c1 complex, complex III, CIII) and cytochrome c oxidase (complex IV, CIV), that cooperate to transfer electrons derived from NADH and succinate to molecular oxygen, creating an electrochemical gradient over the inner membrane that drives transmembrane transport and the ATP synthase. Cytochrome c oxidase is the component of the respiratory chain that catalyzes the reduction of oxygen to water. Electrons originating from reduced cytochrome c in the intermembrane space (IMS) are transferred via the dinuclear copper A center (CU(A)) of subunit 2 and heme A of subunit 1 to the active site in subunit 1, a binuclear center (BNC) formed by heme A3 and copper B (CU(B)). The BNC reduces molecular oxygen to 2 water molecules using 4 electrons from cytochrome c in the IMS and 4 protons from the mitochondrial matrix. This chain is Cytochrome c oxidase subunit 2 (MT-CO2), found in Desmodillus auricularis (Cape short-eared gerbil).